The following is a 97-amino-acid chain: Co-chaperonin GroES (97 aa).

It belongs to the GroES chaperonin family. Heptamer of 7 subunits arranged in a ring. Interacts with the chaperonin GroEL.

The protein resides in the cytoplasm. In terms of biological role, together with the chaperonin GroEL, plays an essential role in assisting protein folding. The GroEL-GroES system forms a nano-cage that allows encapsulation of the non-native substrate proteins and provides a physical environment optimized to promote and accelerate protein folding. GroES binds to the apical surface of the GroEL ring, thereby capping the opening of the GroEL channel. The polypeptide is Co-chaperonin GroES (Pectobacterium carotovorum subsp. carotovorum (strain PC1)).